Reading from the N-terminus, the 198-residue chain is Glycerol-3-phosphate acyltransferase (198 aa).

5 helical membrane-spanning segments follow: residues L5–G25, S56–F76, F84–F104, A114–L134, and L158–W178.

It belongs to the PlsY family. In terms of assembly, probably interacts with PlsX.

Its subcellular location is the cell membrane. It carries out the reaction an acyl phosphate + sn-glycerol 3-phosphate = a 1-acyl-sn-glycero-3-phosphate + phosphate. It functions in the pathway lipid metabolism; phospholipid metabolism. In terms of biological role, catalyzes the transfer of an acyl group from acyl-phosphate (acyl-PO(4)) to glycerol-3-phosphate (G3P) to form lysophosphatidic acid (LPA). This enzyme utilizes acyl-phosphate as fatty acyl donor, but not acyl-CoA or acyl-ACP. The chain is Glycerol-3-phosphate acyltransferase from Listeria welshimeri serovar 6b (strain ATCC 35897 / DSM 20650 / CCUG 15529 / CIP 8149 / NCTC 11857 / SLCC 5334 / V8).